Consider the following 108-residue polypeptide: UPF0235 protein RB8260 (108 aa).

It belongs to the UPF0235 family.

The sequence is that of UPF0235 protein RB8260 from Rhodopirellula baltica (strain DSM 10527 / NCIMB 13988 / SH1).